Reading from the N-terminus, the 249-residue chain is Anti-H(O) lectin 2 (249 aa).

An N-linked (GlcNAc...) asparagine glycan is attached at Asn118. 2 residues coordinate Mn(2+): Glu130 and Asp132. Ca(2+) is bound by residues Asp132, Tyr134, Asn140, and Asp145. Mn(2+)-binding residues include Asp145 and His148. The N-linked (GlcNAc...) asparagine glycan is linked to Asn245.

Belongs to the leguminous lectin family.

Functionally, di-N-acetylchitobiose specific lectin. The sequence is that of Anti-H(O) lectin 2 from Ulex europaeus (Furze).